The primary structure comprises 104 residues: UPF0235 protein RBE_0633 (104 aa).

Belongs to the UPF0235 family.

The sequence is that of UPF0235 protein RBE_0633 from Rickettsia bellii (strain RML369-C).